The sequence spans 61 residues: MARKSLIAKAKKRPKFKTRAYNRCKICGRSHAYLRKFGMCRICFRELAHEGKLPGVRKASW.

Cys24, Cys27, Cys40, and Cys43 together coordinate Zn(2+).

It belongs to the universal ribosomal protein uS14 family. Zinc-binding uS14 subfamily. Part of the 30S ribosomal subunit. Contacts proteins S3 and S10. Zn(2+) is required as a cofactor.

Functionally, binds 16S rRNA, required for the assembly of 30S particles and may also be responsible for determining the conformation of the 16S rRNA at the A site. This chain is Small ribosomal subunit protein uS14, found in Natranaerobius thermophilus (strain ATCC BAA-1301 / DSM 18059 / JW/NM-WN-LF).